The sequence spans 233 residues: Ribose-5-phosphate isomerase A (233 aa).

Substrate is bound by residues 31–34 (SGST), 87–90 (DGAD), and 100–103 (KGGG). Residue E109 is the Proton acceptor of the active site. Position 127 (K127) interacts with substrate.

This sequence belongs to the ribose 5-phosphate isomerase family. Homodimer.

It catalyses the reaction aldehydo-D-ribose 5-phosphate = D-ribulose 5-phosphate. It functions in the pathway carbohydrate degradation; pentose phosphate pathway; D-ribose 5-phosphate from D-ribulose 5-phosphate (non-oxidative stage): step 1/1. In terms of biological role, catalyzes the reversible conversion of ribose-5-phosphate to ribulose 5-phosphate. The chain is Ribose-5-phosphate isomerase A from Chlamydia caviae (strain ATCC VR-813 / DSM 19441 / 03DC25 / GPIC) (Chlamydophila caviae).